The chain runs to 530 residues: MEPTAPTGQARAAATKLSEAVGAALQEPQRQRRLVLVIVCVALLLDNMLYMVIVPIVPDYIAHMRGGSESPTLISEVWEPTLPPPTLANASAYLANTSASPTAAGSARSILRPRYPTESEDVKIGVLFASKAILQLLVNPLSGPFIDRMSYDVPLLIGLGVMFASTVMFAFAEDYATFFAARSLQGLGSAFADTSGIAMIADKYPEEPERSRALGVALAFISFGSLVAPPFGGILYEFAGKRVPFLVLAAVSLFDALLLLAVAKPFSAAARARANLPVGTPIHRLMLDPYIAVVAGALTTCNIPLAFLEPTIATWMKHTMAASEWEMGMVWLPAFVPHVLGVYLTVRLAARYPHLQWLYGALGLAVIGVSSCVVPACRSFAPLVVSLCGLCFGIALVDTALLPTLAFLVDVRHVSVYGSVYAIADISYSVAYALGPIVAGHIVHSLGFEQLSLGMGLANLLYAPVLLLLRNVGLLTRSRSERDVLLDEPPQGLYDAVRLREVQGKDGGEPCSPPGPFDGCEDDYNYYSRS.

Residues 1–33 lie on the Cytoplasmic side of the membrane; sequence MEPTAPTGQARAAATKLSEAVGAALQEPQRQRR. The chain crosses the membrane as a helical span at residues 34–54; it reads LVLVIVCVALLLDNMLYMVIV. The Lumenal, vesicle portion of the chain corresponds to 55-125; sequence PIVPDYIAHM…PTESEDVKIG (71 aa). Residues asparagine 89 and asparagine 96 are each glycosylated (N-linked (GlcNAc...) asparagine). Residues 126-146 traverse the membrane as a helical segment; the sequence is VLFASKAILQLLVNPLSGPFI. The Cytoplasmic portion of the chain corresponds to 147-152; that stretch reads DRMSYD. A helical membrane pass occupies residues 153-173; sequence VPLLIGLGVMFASTVMFAFAE. Topologically, residues 174-182 are lumenal, vesicle; that stretch reads DYATFFAAR. A helical membrane pass occupies residues 183–203; it reads SLQGLGSAFADTSGIAMIADK. At 204–213 the chain is on the cytoplasmic side; it reads YPEEPERSRA. A helical transmembrane segment spans residues 214–234; sequence LGVALAFISFGSLVAPPFGGI. The Lumenal, vesicle segment spans residues 235-242; sequence LYEFAGKR. A helical membrane pass occupies residues 243–263; it reads VPFLVLAAVSLFDALLLLAVA. Over 264–288 the chain is Cytoplasmic; the sequence is KPFSAAARARANLPVGTPIHRLMLD. Residues 289-309 form a helical membrane-spanning segment; that stretch reads PYIAVVAGALTTCNIPLAFLE. Over 310–325 the chain is Lumenal, vesicle; that stretch reads PTIATWMKHTMAASEW. The helical transmembrane segment at 326-346 threads the bilayer; the sequence is EMGMVWLPAFVPHVLGVYLTV. Topologically, residues 347-356 are cytoplasmic; it reads RLAARYPHLQ. Residues 357–377 form a helical membrane-spanning segment; that stretch reads WLYGALGLAVIGVSSCVVPAC. Topologically, residues 378–388 are lumenal, vesicle; sequence RSFAPLVVSLC. Residues 389 to 409 form a helical membrane-spanning segment; sequence GLCFGIALVDTALLPTLAFLV. Residues 410–422 lie on the Cytoplasmic side of the membrane; sequence DVRHVSVYGSVYA. A helical transmembrane segment spans residues 423-443; the sequence is IADISYSVAYALGPIVAGHIV. Residues 444-447 lie on the Lumenal, vesicle side of the membrane; the sequence is HSLG. A helical transmembrane segment spans residues 448-468; sequence FEQLSLGMGLANLLYAPVLLL. At 469 to 530 the chain is on the cytoplasmic side; that stretch reads LRNVGLLTRS…EDDYNYYSRS (62 aa). Residues 471-530 form a mediates interaction with SEC14L1 region; the sequence is NVGLLTRSRSERDVLLDEPPQGLYDAVRLREVQGKDGGEPCSPPGPFDGCEDDYNYYSRS. The segment at 504-530 is disordered; the sequence is GKDGGEPCSPPGPFDGCEDDYNYYSRS.

The protein belongs to the major facilitator superfamily. Vesicular transporter family. As to quaternary structure, interacts with SEC14L1. Expressed in the spinal cord, brain (excluding the cerebellum), brain stem and cholinergic tissues. Not expressed in peripheral tissues such as liver and kidney.

The protein resides in the cytoplasmic vesicle. It is found in the secretory vesicle. It localises to the synaptic vesicle membrane. It catalyses the reaction acetylcholine(out) + 2 H(+)(in) = acetylcholine(in) + 2 H(+)(out). The catalysed reaction is choline(in) + 2 H(+)(out) = choline(out) + 2 H(+)(in). It carries out the reaction serotonin(in) + 2 H(+)(out) = serotonin(out) + 2 H(+)(in). In terms of biological role, electrogenic antiporter that exchanges one cholinergic neurotransmitter, acetylcholine or choline, with two intravesicular protons across the membrane of synaptic vesicles. Uses the electrochemical proton gradient established by the V-type proton-pump ATPase to store neurotransmitters inside the vesicles prior to their release via exocytosis. Determines cholinergic vesicular quantal size at presynaptic nerve terminals in developing neuro-muscular junctions with an impact on motor neuron differentiation and innervation pattern. Part of forebrain cholinergic system, regulates hippocampal synapse transmissions that underlie spatial memory formation. Can transport serotonin. The chain is Vesicular acetylcholine transporter (Slc18a3) from Mus musculus (Mouse).